The sequence spans 81 residues: Conotoxin Lt6.4 (81 aa).

The signal sequence occupies residues 1 to 19 (MKLVLAIVLILMFLSLSAG). The propeptide occupies 20-42 (AETSDNGVSRGGHRPQYWPVTPP). Disulfide bonds link cysteine 46–cysteine 60, cysteine 53–cysteine 65, and cysteine 59–cysteine 80.

This sequence belongs to the conotoxin I3 superfamily. Expressed by the venom duct.

Its subcellular location is the secreted. This chain is Conotoxin Lt6.4, found in Conus litteratus (Lettered cone).